The sequence spans 343 residues: ABC transporter riboflavin-binding protein RfuA (343 aa).

The N-terminal stretch at 1–19 (MNGAVCVLSALIAVFTCFS) is a signal peptide. The N-palmitoyl cysteine moiety is linked to residue Cys-20. The S-diacylglycerol cysteine moiety is linked to residue Cys-20. Riboflavin is bound by residues 43–46 (SPVY), Asp-124, Gln-140, Tyr-176, Trp-208, and Asp-255.

This sequence belongs to the BMP lipoprotein family. As to quaternary structure, monomer in solution. The complex is probably composed of two ATP-binding proteins (RfuB), two transmembrane proteins (RfuC and RfuD) and a solute-binding protein (RfuA).

Its subcellular location is the cell inner membrane. Functionally, probably part of the ABC transporter complex RfuABCD involved in riboflavin import. Binds riboflavin. The sequence is that of ABC transporter riboflavin-binding protein RfuA from Treponema pallidum (strain Nichols).